The primary structure comprises 475 residues: GDP-fucose protein O-fucosyltransferase 3 (475 aa).

The Cytoplasmic segment spans residues 1–8 (MVRMRRKR). A helical; Signal-anchor for type II membrane protein transmembrane segment spans residues 9-29 (LWASCICFAAFFFLLVTLQVI). Over 30-475 (TELGNSENKA…QEFWMLVFKQ (446 aa)) the chain is Lumenal. Asn107, Asn165, and Asn315 each carry an N-linked (GlcNAc...) asparagine glycan. A disulfide bridge connects residues Cys386 and Cys389. The N-linked (GlcNAc...) asparagine glycan is linked to Asn462.

The protein belongs to the glycosyltransferase 10 family.

The protein resides in the endoplasmic reticulum membrane. The catalysed reaction is L-threonyl-[protein] + GDP-beta-L-fucose = 3-O-(alpha-L-fucosyl)-L-threonyl-[protein] + GDP + H(+). It catalyses the reaction L-seryl-[protein] + GDP-beta-L-fucose = 3-O-(alpha-L-fucosyl)-L-seryl-[protein] + GDP + H(+). It functions in the pathway protein modification; protein glycosylation. Its function is as follows. Protein O-fucosyltransferase that specifically catalyzes O-fucosylation of serine or threonine residues in EMI domains of target proteins. Attaches fucose through an O-glycosidic linkage. O-fucosylation of EMI domain-containing proteins may be required for facilitating protein folding and secretion. This chain is GDP-fucose protein O-fucosyltransferase 3 (FUT10), found in Gallus gallus (Chicken).